The chain runs to 324 residues: tRNA (cytidine(32)/guanosine(34)-2'-O)-methyltransferase (324 aa).

Positions 53, 55, 75, 91, and 116 each coordinate S-adenosyl-L-methionine. Lys-156 acts as the Proton acceptor in catalysis. Residues 221 to 240 are required for binding to WDR6; that stretch reads DFNQLDGPTRVIVPFVACGD.

This sequence belongs to the class I-like SAM-binding methyltransferase superfamily. RNA methyltransferase RlmE family. TRM7 subfamily. Interacts with WDR6; the interaction is direct, and required for 2'-O-methylation of position 34 in substrate tRNAs.

It localises to the cytoplasm. The protein resides in the nucleus. The catalysed reaction is cytidine(32)/guanosine(34) in tRNA + 2 S-adenosyl-L-methionine = 2'-O-methylcytidine(32)/2'-O-methylguanosine(34) in tRNA + 2 S-adenosyl-L-homocysteine + 2 H(+). Its function is as follows. Methylates the 2'-O-ribose of nucleotides at positions 32 and 34 of the tRNA anticodon loop of substrate tRNAs. Requisite for faithful cytoplasmic translation. Requires THADA for methylation of the cytidine at position 32 of the anticodon loop of substrate tRNAs. Requires WDR6 for methylation of the nucleotide at position 34 of the anticodon loop of substrate tRNAs. Promotes translation efficiency of the UUU codon. Plays a role in neurogenesis. Required for expression of genes involved in neurogenesis and mitochondrial translation and energy generation. Requisite for RNA-mediated gene silencing. May modify position 32 in tRNA(Arg(ACG)), tRNA(Gln(CUG)), tRNA(Leu(UAA)), tRNA(Leu(UAG)), tRNA(Leu(AAG)), tRNA(Leu(CAG)), tRNA(Phe(GAA)), tRNA(Trp(CCA)) and tRNA(Val(AAC)), and position 34 in tRNA(Phe(GAA)), tRNA(Leu(CAA)), tRNA(Leu(UAA)), tRNA(Sec(UCA)), and tRNA(Trp(CCA)). This Mus musculus (Mouse) protein is tRNA (cytidine(32)/guanosine(34)-2'-O)-methyltransferase.